The chain runs to 206 residues: FMN-dependent NADH:quinone oxidoreductase 2 (206 aa).

FMN is bound at residue Ser10.

Belongs to the azoreductase type 1 family. As to quaternary structure, homodimer. FMN serves as cofactor.

The enzyme catalyses 2 a quinone + NADH + H(+) = 2 a 1,4-benzosemiquinone + NAD(+). It carries out the reaction N,N-dimethyl-1,4-phenylenediamine + anthranilate + 2 NAD(+) = 2-(4-dimethylaminophenyl)diazenylbenzoate + 2 NADH + 2 H(+). Quinone reductase that provides resistance to thiol-specific stress caused by electrophilic quinones. Its function is as follows. Also exhibits azoreductase activity. Catalyzes the reductive cleavage of the azo bond in aromatic azo compounds to the corresponding amines. The chain is FMN-dependent NADH:quinone oxidoreductase 2 from Rhizobium etli (strain ATCC 51251 / DSM 11541 / JCM 21823 / NBRC 15573 / CFN 42).